The sequence spans 425 residues: MSAIADITAREILDSRGNPTVEVDVILDSGAMGRAAVPSGASTGAHEAVELRDGEPARFGGKGVQRAVEAVEGEIFDAIGGMDASEQVAIDETMIDLDGTPNKARLGANAILGVSLAVAKAAADEIGLPLYRYLGGVYARTLPVPMMNIINGGKHADNPIDIQEFMIQPVGAASIAEAVRMGSEVFQALKKILHDAGHNTNVGDEGGFAPGLKSAEEALGFMTRAVEAAGYRAGEDIAFALDCAATEFYKDGRYHLEGEGKVLDAGGMTDYIAALAKSFPIISVEDPLSEDDWEGWAHFTSTLGGAMQVVGDDLFVTNPTRLRRGIAAKSANSILIKVNQIGTLSETLEAVELAQRAGMTAVISHRSGETEDATIADIAVATNAGQIKTGSLARSDRVAKYNQLIRIEAELDIAGRFAGRTILRG.

A (2R)-2-phosphoglycerate-binding site is contributed by Gln163. Catalysis depends on Glu205, which acts as the Proton donor. Residues Asp242, Glu285, and Asp312 each coordinate Mg(2+). Residues Lys337, Arg366, Ser367, and Lys388 each coordinate (2R)-2-phosphoglycerate. Lys337 functions as the Proton acceptor in the catalytic mechanism.

This sequence belongs to the enolase family. Requires Mg(2+) as cofactor.

Its subcellular location is the cytoplasm. It is found in the secreted. The protein localises to the cell surface. It catalyses the reaction (2R)-2-phosphoglycerate = phosphoenolpyruvate + H2O. It participates in carbohydrate degradation; glycolysis; pyruvate from D-glyceraldehyde 3-phosphate: step 4/5. Catalyzes the reversible conversion of 2-phosphoglycerate (2-PG) into phosphoenolpyruvate (PEP). It is essential for the degradation of carbohydrates via glycolysis. The protein is Enolase of Acidiphilium cryptum (strain JF-5).